Consider the following 407-residue polypeptide: DAZ-associated protein 1 (407 aa).

Methionine 1 bears the N-acetylmethionine mark. RRM domains are found at residues 10–97 and 113–190; these read GKLF…RTRP and NKIF…RAEP. Residues 74–117 form a disordered region; that stretch reads TLDGRNIDPKPCTPRGMQPERTRPKEGWQKGPRSDNSKSNKIFV. Residues 91-111 are compositionally biased toward basic and acidic residues; that stretch reads QPERTRPKEGWQKGPRSDNSK. Position 150 is an N6-acetyllysine (lysine 150). Residues 185–194 are compositionally biased toward basic and acidic residues; the sequence is VKRAEPRDSK. The segment at 185-407 is disordered; the sequence is VKRAEPRDSK…NVQGFHPYRR (223 aa). Residues 195-207 are compositionally biased toward polar residues; sequence SQAPGQPGASQWG. The segment covering 247-262 has biased composition (pro residues); sequence GPPPAGRGAPPPPPPF. An Omega-N-methylarginine modification is found at arginine 253. Residues 280 to 294 show a composition bias toward low complexity; sequence FPQGYGAPPQFSFGY. Residues 295–315 are compositionally biased toward pro residues; the sequence is GPPPPPPDQFAPPGVPPPPAT. The span at 364–379 shows a compositional bias: low complexity; that stretch reads SDPSQQPPSYGGPSVP. Over residues 380–393 the composition is skewed to gly residues; the sequence is GSGGPPAGGSGFGR.

Interacts with DAZ and DAZL. In terms of processing, acetylation at Lys-150 is predominantly observed in the nuclear fraction, and may regulate nucleocytoplasmic transport. In terms of tissue distribution, mainly expressed in testis. Expressed to a lower level in thymus. Weakly or not expressed in heart, liver, brain, placenta, lung, skeletal muscle, kidney and pancreas.

The protein localises to the cytoplasm. The protein resides in the nucleus. Functionally, RNA-binding protein, which may be required during spermatogenesis. This is DAZ-associated protein 1 (DAZAP1) from Homo sapiens (Human).